Here is a 278-residue protein sequence, read N- to C-terminus: Large ribosomal subunit protein uL2 (278 aa).

2 disordered regions span residues 29–53 and 223–278; these read PEKS…TTRH and GVAM…GKKR. The segment covering 255–268 has biased composition (basic and acidic residues); sequence GRTRRPGKESDKLI. Basic residues predominate over residues 269 to 278; that stretch reads VRRRRTGKKR.

It belongs to the universal ribosomal protein uL2 family. Part of the 50S ribosomal subunit. Forms a bridge to the 30S subunit in the 70S ribosome.

One of the primary rRNA binding proteins. Required for association of the 30S and 50S subunits to form the 70S ribosome, for tRNA binding and peptide bond formation. It has been suggested to have peptidyltransferase activity; this is somewhat controversial. Makes several contacts with the 16S rRNA in the 70S ribosome. The sequence is that of Large ribosomal subunit protein uL2 from Kineococcus radiotolerans (strain ATCC BAA-149 / DSM 14245 / SRS30216).